The following is a 185-amino-acid chain: Ribosome-recycling factor (185 aa).

The protein belongs to the RRF family.

The protein resides in the cytoplasm. Its function is as follows. Responsible for the release of ribosomes from messenger RNA at the termination of protein biosynthesis. May increase the efficiency of translation by recycling ribosomes from one round of translation to another. This is Ribosome-recycling factor from Clostridium botulinum (strain Alaska E43 / Type E3).